Reading from the N-terminus, the 527-residue chain is Light-independent protochlorophyllide reductase subunit B (527 aa).

Residue aspartate 36 coordinates [4Fe-4S] cluster. Aspartate 292 serves as the catalytic Proton donor. 428–429 (GL) contacts substrate.

It belongs to the ChlB/BchB/BchZ family. Protochlorophyllide reductase is composed of three subunits; BchL, BchN and BchB. Forms a heterotetramer of two BchB and two BchN subunits. It depends on [4Fe-4S] cluster as a cofactor.

The enzyme catalyses chlorophyllide a + oxidized 2[4Fe-4S]-[ferredoxin] + 2 ADP + 2 phosphate = protochlorophyllide a + reduced 2[4Fe-4S]-[ferredoxin] + 2 ATP + 2 H2O. Its pathway is porphyrin-containing compound metabolism; bacteriochlorophyll biosynthesis (light-independent). Its function is as follows. Component of the dark-operative protochlorophyllide reductase (DPOR) that uses Mg-ATP and reduced ferredoxin to reduce ring D of protochlorophyllide (Pchlide) to form chlorophyllide a (Chlide). This reaction is light-independent. The NB-protein (BchN-BchB) is the catalytic component of the complex. The chain is Light-independent protochlorophyllide reductase subunit B from Chlorobium phaeovibrioides (strain DSM 265 / 1930) (Prosthecochloris vibrioformis (strain DSM 265)).